The chain runs to 341 residues: Biotin synthase (341 aa).

The region spanning 43 to 266 (SEIQLSQLLS…IAVARIVCPK (224 aa)) is the Radical SAM core domain. Positions 58, 62, and 65 each coordinate [4Fe-4S] cluster. 4 residues coordinate [2Fe-2S] cluster: C102, C133, C193, and R270.

Belongs to the radical SAM superfamily. Biotin synthase family. As to quaternary structure, homodimer. It depends on [4Fe-4S] cluster as a cofactor. Requires [2Fe-2S] cluster as cofactor.

It catalyses the reaction (4R,5S)-dethiobiotin + (sulfur carrier)-SH + 2 reduced [2Fe-2S]-[ferredoxin] + 2 S-adenosyl-L-methionine = (sulfur carrier)-H + biotin + 2 5'-deoxyadenosine + 2 L-methionine + 2 oxidized [2Fe-2S]-[ferredoxin]. The protein operates within cofactor biosynthesis; biotin biosynthesis; biotin from 7,8-diaminononanoate: step 2/2. Its function is as follows. Catalyzes the conversion of dethiobiotin (DTB) to biotin by the insertion of a sulfur atom into dethiobiotin via a radical-based mechanism. The protein is Biotin synthase of Caulobacter vibrioides (strain ATCC 19089 / CIP 103742 / CB 15) (Caulobacter crescentus).